The chain runs to 577 residues: MALLWLLSVFLLVPGTQGTEDGDMRLVNGASANEGRVEIFYRGRWGTVCDNLWNLLDAHVVCRALGYENATQALGRAAFGPGKGPIMLDEVECTGTESSLASCRSLGWMVSRCGHEKDAGVVCSNDTTGLHILDLSGELSDALGQIFDSQQGCDLFIQVTGQGYEDLSLCAHTLILRTNPEAQALWQVVGSSVIMRVDAECMPVVRDFLRYFYSRRIEVSMSSVKCLHKLASAYGATELQDYCGRLFATLLPQDPTFHTPLDLYAYARATGDSMLEDLCVQFLAWNFEPLTQSESWSAVPTTLIQALLPKSELAVSSELDLLKAVDQWSTETIASHEDIERLVEQVRFPMMLPQELFELQFNLSLYQDHQALFQRKTMQALEFHTVPVEVLAKYKGLNLTEDTYKPRLYTSSTWSSLVMASTWRAQRYEYNRYNQLYTYGYGSVARYNSYQSFQTPQHPSFLFKDKQISWSATYLPTMQSCWNYGFSCTSNELPVLGLTTSSYSNPTIGYENRVLILCGGYSVVDVTSFEGSKAPIPTALDTNSSKTPSLFPCASGAFSSFRVVIRPFYLTNSTDMV.

The N-terminal stretch at 1-18 (MALLWLLSVFLLVPGTQG) is a signal peptide. Residues 24 to 124 (MRLVNGASAN…HEKDAGVVCS (101 aa)) enclose the SRCR domain. Intrachain disulfides connect Cys49-Cys113, Cys62-Cys123, and Cys93-Cys103. Asn69 carries an N-linked (GlcNAc...) asparagine glycan. Residue Asn125 is glycosylated (N-linked (GlcNAc...) asparagine). The region spanning 153–221 (CDLFIQVTGQ…FYSRRIEVSM (69 aa)) is the BTB domain. The BACK domain maps to 260–360 (PLDLYAYARA…MLPQELFELQ (101 aa)). 4 N-linked (GlcNAc...) asparagine glycosylation sites follow: Asn362, Asn398, Asn543, and Asn572.

In terms of assembly, homodimers and homomultimers. The multimers form ring-like structures with a diameter of 30-40 nm. Binds LGALS1 and LGALS3. Binds ITGB1, COL4A1, COL5A1, COL6A1, FN1 and NID. Interacts with PPIC (in vitro). The unglycosylated form interacts with PDE4DIP isoform 2/MMG8/SMYLE; this interaction may connect a pericentrosomal complex to the gamma-tubulin ring complex (gamma-TuRC) to promote microtubule assembly and acetylation. N-glycosylated. In terms of tissue distribution, detected in embryo, liver, spleen, kidney, lung, heart, intestine, thymus and lymph node.

The protein resides in the secreted. It localises to the extracellular space. Its subcellular location is the extracellular matrix. In terms of biological role, promotes integrin-mediated cell adhesion. May stimulate host defense against viruses and tumor cells. The protein is Galectin-3-binding protein (Lgals3bp) of Mus musculus (Mouse).